We begin with the raw amino-acid sequence, 273 residues long: 4-hydroxy-tetrahydrodipicolinate reductase (273 aa).

12-17 (GAGGRM) contacts NAD(+). Arginine 39 contacts NADP(+). NAD(+)-binding positions include 102-104 (GTT) and 126-129 (AANF). Histidine 159 serves as the catalytic Proton donor/acceptor. Residue histidine 160 participates in (S)-2,3,4,5-tetrahydrodipicolinate binding. Lysine 163 serves as the catalytic Proton donor. 169–170 (GT) lines the (S)-2,3,4,5-tetrahydrodipicolinate pocket.

This sequence belongs to the DapB family. Homotetramer.

It is found in the cytoplasm. It carries out the reaction (S)-2,3,4,5-tetrahydrodipicolinate + NAD(+) + H2O = (2S,4S)-4-hydroxy-2,3,4,5-tetrahydrodipicolinate + NADH + H(+). The enzyme catalyses (S)-2,3,4,5-tetrahydrodipicolinate + NADP(+) + H2O = (2S,4S)-4-hydroxy-2,3,4,5-tetrahydrodipicolinate + NADPH + H(+). It participates in amino-acid biosynthesis; L-lysine biosynthesis via DAP pathway; (S)-tetrahydrodipicolinate from L-aspartate: step 4/4. In terms of biological role, catalyzes the conversion of 4-hydroxy-tetrahydrodipicolinate (HTPA) to tetrahydrodipicolinate. This is 4-hydroxy-tetrahydrodipicolinate reductase from Sodalis glossinidius (strain morsitans).